Consider the following 286-residue polypeptide: Nucleoid occlusion protein (286 aa).

The H-T-H motif DNA-binding region spans 147 to 166; it reads EALAQRLGKNQSTVANKLRL.

This sequence belongs to the ParB family.

It localises to the cytoplasm. It is found in the nucleoid. In terms of biological role, effects nucleoid occlusion by binding relatively nonspecifically to DNA and preventing the assembly of the division machinery in the vicinity of the nucleoid, especially under conditions that disturb the cell cycle. It helps to coordinate cell division and chromosome segregation by preventing the formation of the Z ring through the nucleoid, which would cause chromosome breakage. This Oceanobacillus iheyensis (strain DSM 14371 / CIP 107618 / JCM 11309 / KCTC 3954 / HTE831) protein is Nucleoid occlusion protein.